A 574-amino-acid polypeptide reads, in one-letter code: Septation ring formation regulator EzrA (574 aa).

Residues 1-7 lie on the Extracellular side of the membrane; the sequence is MSIGLVI. The helical transmembrane segment at 8–26 threads the bilayer; it reads LVAVVALLLVVGYGTAVLM. Coiled-coil stretches lie at residues 26–47, 105–189, 258–346, 375–415, and 455–494; these read MRKR…LYNL, KAKH…QFVT, ESRF…FLIS, SETK…IEKD, and STSN…LEEE. Over 27–574 the chain is Cytoplasmic; the sequence is RKRNEALLQN…YEKTRENIRF (548 aa).

It belongs to the EzrA family.

It localises to the cell membrane. Functionally, negative regulator of FtsZ ring formation; modulates the frequency and position of FtsZ ring formation. Inhibits FtsZ ring formation at polar sites. Interacts either with FtsZ or with one of its binding partners to promote depolymerization. The chain is Septation ring formation regulator EzrA from Streptococcus sanguinis (strain SK36).